The sequence spans 93 residues: Defensin-like protein 210 (93 aa).

The N-terminal stretch at 1–19 (MKTIILFLTLLVISSSCTS) is a signal peptide. Cystine bridges form between C63–C80, C66–C85, and C70–C87.

It belongs to the DEFL family.

The protein resides in the secreted. This chain is Defensin-like protein 210, found in Arabidopsis thaliana (Mouse-ear cress).